Consider the following 423-residue polypeptide: Diels-Alderase cheD (423 aa).

A signal peptide spans 1–18 (MKLCALFAGAVISTSAVA). N84 and N132 each carry an N-linked (GlcNAc...) asparagine glycan.

This sequence belongs to the Diels-Alderase family.

The protein operates within secondary metabolite biosynthesis. In terms of biological role, diels-Alderase; part of the gene cluster that mediates the biosynthesis of chaetoglobosin A which has a unique inhibitory activity against actin polymerization in mammalian cells. Chaetoglobosin A and its intermediates are involved in the morphological differentiation of C.globosum. The first step of the pathway is the synthesis of prochaetoglobosin I via condensation of one acetyl-CoA, 8 malonyl-CoA, and a L-tryptophan molecule by the PKS-NRPS hybrid synthetase cheA, followed by reduction of backbone double bond to install desired geometry by the enoyl reductase cheB. Further multiple oxidation steps performed by the cytochrome P450 monooxygenases cheE and cheG, as well as by the FAD-linked oxidoreductase cheF, lead to the formation of chaetoglobosin A. Depending on the order of action of these reductases, distinct intermediates can be identified. Within the pathway, the cytochrome P450 monooxygenase cheE catalyzes a stereospecific epoxidation on prochaetoglobosin I, cytoglobosin D, and chaetoglobosin J intermediates. The FAD-linked oxidoreductase cheF performs dehydrogenation of the C-20 hydroxyl groups in the 20-dihyrochaetoglobosin A and cytoglobosin D intermediates. Finally, the cytochrome P450 monooxygenase cheG can catalyze the stereospecific dihydroxylation of prochaetoglobosin I and prochaetoglobosin IV at C-19 and C-20, respectively. The Diels-Alderase cheD may play a role in the post-PKS-NRPS biosynthetic steps catalyzing Diels-Alder cyclization. The sequence is that of Diels-Alderase cheD from Chaetomium globosum (strain ATCC 6205 / CBS 148.51 / DSM 1962 / NBRC 6347 / NRRL 1970) (Soil fungus).